The following is a 346-amino-acid chain: LRP2-binding protein (346 aa).

The TPR repeat unit spans residues 58-91 (AMAYFLRGQLYFEEGWYEEALAQFEEIQEKDHQA). 6 Sel1-like repeats span residues 92–124 (IYQLGVMYYDGLGTIANAEKGVNYMRKILDSSC), 132–167 (FAAAYNLGRAYFEGKGVKRSDEEAERLWLLAADNGN), 172–205 (VKAQSILGLFYSMKEPKELEKAFFWHSEACGNGS), 206–241 (LESQGALGLMYFYGQGIRQDTDAALHCLREAAERGN), 242–276 (VYAQGTLVEYYYKMKFFTKCVSFSKRIADYDEVHD), and 296–331 (AMAAFYHGRCLQLGLGIMKDEESAKHYYSKACRLNP).

In terms of assembly, interacts with LRP2.

Its subcellular location is the cytoplasm. Its function is as follows. May act as an adapter that regulates LRP2 function. In Mus musculus (Mouse), this protein is LRP2-binding protein (Lrp2bp).